A 546-amino-acid polypeptide reads, in one-letter code: Parathyroid hormone 2 receptor (546 aa).

The first 24 residues, 1-24 (MAWLETFTYICGWLILSSCLLVRA), serve as a signal peptide directing secretion. Topologically, residues 27–143 (DSDGTITIEE…GKQEFFESLY (117 aa)) are extracellular. N-linked (GlcNAc...) asparagine glycans are attached at residues Asn51, Asn106, Asn116, and Asn121. Residues 144–167 (ILYTVGYSISFGSLAVAILIIGYF) form a helical membrane-spanning segment. Residues 168 to 174 (RRLHCTR) are Cytoplasmic-facing. A helical membrane pass occupies residues 175–194 (NYIHLHLFVSFMLRAMSIFV). Over 195 to 235 (KDRVAQAHLGVEALQSLVMQGDLQNFIGGPSVDKSQYVGCK) the chain is Extracellular. A helical transmembrane segment spans residues 236-258 (IAVVMFIYFLATNYYWILVEGLY). Residues 259–273 (LHNLIFVSFFSDTKY) are Cytoplasmic-facing. Residues 274–295 (LWGFISIGWGFPAVFVVAWAVA) form a helical membrane-spanning segment. Topologically, residues 296–313 (RATLADTRCWELSAGDRW) are extracellular. Residues 314 to 334 (IYQAPILAAIGLNFILFLNTV) traverse the membrane as a helical segment. At 335 to 361 (RVLATKIWETNAVGHDMRKQYRKLAKS) the chain is on the cytoplasmic side. The chain crosses the membrane as a helical span at residues 362–380 (TLVLVLVFGVHYIVFVCQP). The Extracellular segment spans residues 381–391 (HSFSGLWWEIR). A helical membrane pass occupies residues 392-414 (MHCELFFNSFQGFFVSIVYCYCN). Topologically, residues 415-546 (GEVQAEVKKM…EGCKGETHPI (132 aa)) are cytoplasmic. A disordered region spans residues 497-546 (SEQDCQTHSPPEETKEGHRRQGDDSPVMESSRPVAFTLDTEGCKGETHPI). Basic and acidic residues-rich tracts occupy residues 506–519 (PPEETKEGHRRQGD) and 537–546 (EGCKGETHPI).

It belongs to the G-protein coupled receptor 2 family. As to quaternary structure, binds to TIPF39/TIP39.

Its subcellular location is the cell membrane. Functionally, this is a specific receptor for parathyroid hormone. The activity of this receptor is mediated by G proteins which activate adenylyl cyclase. PTH2R may be responsible for PTH effects in a number of physiological systems. It may play a significant role in pancreatic function. PTH2R presence in neurons indicates that it may function as a neurotransmitter receptor. This Mus musculus (Mouse) protein is Parathyroid hormone 2 receptor (Pth2r).